The following is a 354-amino-acid chain: UDP-N-acetylglucosamine--N-acetylmuramyl-(pentapeptide) pyrophosphoryl-undecaprenol N-acetylglucosamine transferase 1 (354 aa).

UDP-N-acetyl-alpha-D-glucosamine contacts are provided by residues T12–G14, R163, S193, and Q287.

This sequence belongs to the glycosyltransferase 28 family. MurG subfamily.

The protein resides in the cell membrane. The enzyme catalyses di-trans,octa-cis-undecaprenyl diphospho-N-acetyl-alpha-D-muramoyl-L-alanyl-D-glutamyl-meso-2,6-diaminopimeloyl-D-alanyl-D-alanine + UDP-N-acetyl-alpha-D-glucosamine = di-trans,octa-cis-undecaprenyl diphospho-[N-acetyl-alpha-D-glucosaminyl-(1-&gt;4)]-N-acetyl-alpha-D-muramoyl-L-alanyl-D-glutamyl-meso-2,6-diaminopimeloyl-D-alanyl-D-alanine + UDP + H(+). It functions in the pathway cell wall biogenesis; peptidoglycan biosynthesis. Cell wall formation. Catalyzes the transfer of a GlcNAc subunit on undecaprenyl-pyrophosphoryl-MurNAc-pentapeptide (lipid intermediate I) to form undecaprenyl-pyrophosphoryl-MurNAc-(pentapeptide)GlcNAc (lipid intermediate II). The chain is UDP-N-acetylglucosamine--N-acetylmuramyl-(pentapeptide) pyrophosphoryl-undecaprenol N-acetylglucosamine transferase 1 from Bacillus thuringiensis (strain Al Hakam).